The sequence spans 863 residues: Aminopeptidase N (863 aa).

Substrate-binding positions include glutamate 124 and 263–267 (GAMEN). Position 299 (histidine 299) interacts with Zn(2+). The Proton acceptor role is filled by glutamate 300. Zn(2+) is bound by residues histidine 303 and glutamate 322.

This sequence belongs to the peptidase M1 family. It depends on Zn(2+) as a cofactor.

The catalysed reaction is Release of an N-terminal amino acid, Xaa-|-Yaa- from a peptide, amide or arylamide. Xaa is preferably Ala, but may be most amino acids including Pro (slow action). When a terminal hydrophobic residue is followed by a prolyl residue, the two may be released as an intact Xaa-Pro dipeptide.. Aminopeptidase N is involved in the degradation of intracellular peptides generated by protein breakdown during normal growth as well as in response to nutrient starvation. This chain is Aminopeptidase N (pepN), found in Caulobacter vibrioides (strain ATCC 19089 / CIP 103742 / CB 15) (Caulobacter crescentus).